A 38-amino-acid chain; its full sequence is MKKFLTTAPVFSAIWFTLTAGIMIEFNRFYPDLLFHPL.

A helical transmembrane segment spans residues 4–24 (FLTTAPVFSAIWFTLTAGIMI).

This sequence belongs to the PsaJ family.

The protein resides in the plastid. It is found in the organellar chromatophore thylakoid membrane. Its function is as follows. May help in the organization of the PsaE and PsaF subunits. This Paulinella chromatophora protein is Photosystem I reaction center subunit IX.